Here is a 267-residue protein sequence, read N- to C-terminus: MSIRLGVNIDHIATLREARAIYEPDPLEAVFIAKNAGAHQITFHLREDRRHIHDSDVKRIIQSSPLPINIECALDEKIIDYLCGLKPQRITLVPEKREEITTEGGLDIESRYDSIRDTLKAFESCGIVSALFIDPKKESIFLARELGAQAVELHTGRYANLMLMAYSNLSRTHRALEEFAFPTQEINEEISRTLDDIAQCAKLATSTIDTRPLECFAGHGLNYQNVGAIAQIPQISELNIGHSIIARSVFVGLERAIIQMREAMCQK.

3-amino-2-oxopropyl phosphate is bound at residue Asn-8. 10-11 (DH) lines the 1-deoxy-D-xylulose 5-phosphate pocket. A 3-amino-2-oxopropyl phosphate-binding site is contributed by Arg-19. Residue His-44 is the Proton acceptor of the active site. Arg-46 and His-51 together coordinate 1-deoxy-D-xylulose 5-phosphate. Glu-71 functions as the Proton acceptor in the catalytic mechanism. A 1-deoxy-D-xylulose 5-phosphate-binding site is contributed by Thr-101. His-219 functions as the Proton donor in the catalytic mechanism. Residues Gly-220 and 241–242 (GH) each bind 3-amino-2-oxopropyl phosphate.

It belongs to the PNP synthase family. Homooctamer; tetramer of dimers.

The protein resides in the cytoplasm. The catalysed reaction is 3-amino-2-oxopropyl phosphate + 1-deoxy-D-xylulose 5-phosphate = pyridoxine 5'-phosphate + phosphate + 2 H2O + H(+). Its pathway is cofactor biosynthesis; pyridoxine 5'-phosphate biosynthesis; pyridoxine 5'-phosphate from D-erythrose 4-phosphate: step 5/5. Catalyzes the complicated ring closure reaction between the two acyclic compounds 1-deoxy-D-xylulose-5-phosphate (DXP) and 3-amino-2-oxopropyl phosphate (1-amino-acetone-3-phosphate or AAP) to form pyridoxine 5'-phosphate (PNP) and inorganic phosphate. In Helicobacter hepaticus (strain ATCC 51449 / 3B1), this protein is Pyridoxine 5'-phosphate synthase.